Here is a 470-residue protein sequence, read N- to C-terminus: Dynein axonemal assembly factor 11 (470 aa).

4 LRR repeats span residues 20-43, 44-65, 66-89, and 90-110; these read IFSL…DKWC, RELK…VSKL, KKLE…GCES, and LQKL…NSLQ. Positions 128–146 constitute an LRRCT domain; it reads YEGYRQYVVATLPQLKWLD. A coiled-coil region spans residues 177 to 288; that stretch reads LRKRAAEREK…NRSEEELKKK (112 aa). Residues 182-265 are disordered; sequence AEREKATNNL…SQYTPESRLE (84 aa). Residues 194 to 213 show a composition bias toward basic and acidic residues; it reads KQKEGRKAQEKKPGFDRRWY. In terms of domain architecture, CS spans 303–395; it reads VNESKLDFSL…TEMIQTKRAK (93 aa). The disordered stretch occupies residues 447 to 470; the sequence is HRNSARDTADSEDFIDNAEVPPLV.

The protein belongs to the tilB family.

Its subcellular location is the cytoplasm. It is found in the cell projection. It localises to the cilium. The protein resides in the dynein axonemal particle. The protein localises to the flagellum. Involved in dynein arm assembly, is important for expression and transporting outer dynein arm (ODA) proteins from the cytoplasm to the cilia. This chain is Dynein axonemal assembly factor 11 (dnaaf11), found in Xenopus tropicalis (Western clawed frog).